A 362-amino-acid polypeptide reads, in one-letter code: MKKSLELKLQQMLERYEEVGRLLSEASIIADQNQFKSLSKEYAQLEPVSQCYESYLEAKNNLDSLNELLESDDKDLATMAEEEIDIVKKQIEELDEQLQWHLIPKDPDDERNIYLEVRAGTGGDEAAIFAGDLFRMYSRYAESQGWQIELISASHGEHGGYKEIIAKISGQAVYSQLKFESGAHRVQRVPETESQGRVHTSACTVAIMPEVDEINDIQINPDDLRIDTYRSSGAGGQHVNKTDSAIRITHIPTGVVVECQDERSQHKNRAKAMSLLKTRLLDAEVSKQKQEQAQTRKSLVGTGDRSERIRTYNFPQGRLTDHRINLTIYQLSDIMEGNLSLVIDPLKREYHAELLADLGRHD.

An N5-methylglutamine modification is found at glutamine 237.

Belongs to the prokaryotic/mitochondrial release factor family. In terms of processing, methylated by PrmC. Methylation increases the termination efficiency of RF1.

It is found in the cytoplasm. Functionally, peptide chain release factor 1 directs the termination of translation in response to the peptide chain termination codons UAG and UAA. The chain is Peptide chain release factor 1 from Legionella pneumophila (strain Corby).